Reading from the N-terminus, the 360-residue chain is Peptide chain release factor 1 (360 aa).

Gln-235 is modified (N5-methylglutamine). Positions 285-308 (KRQEAEASERRNLLGSGDRSDRNR) are enriched in basic and acidic residues. The disordered stretch occupies residues 285 to 313 (KRQEAEASERRNLLGSGDRSDRNRTYNFP).

This sequence belongs to the prokaryotic/mitochondrial release factor family. In terms of processing, methylated by PrmC. Methylation increases the termination efficiency of RF1.

The protein resides in the cytoplasm. Peptide chain release factor 1 directs the termination of translation in response to the peptide chain termination codons UAG and UAA. This is Peptide chain release factor 1 from Photorhabdus laumondii subsp. laumondii (strain DSM 15139 / CIP 105565 / TT01) (Photorhabdus luminescens subsp. laumondii).